A 180-amino-acid chain; its full sequence is Inosine/xanthosine triphosphatase (180 aa).

8 to 13 (TTNPAK) contacts substrate. Position 38 (aspartate 38) interacts with Mg(2+).

It belongs to the YjjX NTPase family. In terms of assembly, homodimer. Requires Mg(2+) as cofactor. It depends on Mn(2+) as a cofactor.

The enzyme catalyses XTP + H2O = XDP + phosphate + H(+). It catalyses the reaction ITP + H2O = IDP + phosphate + H(+). Phosphatase that hydrolyzes non-canonical purine nucleotides such as XTP and ITP to their respective diphosphate derivatives. Probably excludes non-canonical purines from DNA/RNA precursor pool, thus preventing their incorporation into DNA/RNA and avoiding chromosomal lesions. The sequence is that of Inosine/xanthosine triphosphatase from Yersinia pseudotuberculosis serotype O:1b (strain IP 31758).